The following is a 127-amino-acid chain: S1-like domain-containing protein C146.08c (127 aa).

The region spanning 10 to 86 is the S1-like domain; sequence SFDPPARLEK…NKIDGTILYV (77 aa). Residues 107–127 form a disordered region; that stretch reads ESLNQNDSEESSSSEEEYDSD. The span at 113-127 shows a compositional bias: acidic residues; that stretch reads DSEESSSSEEEYDSD. Phosphotyrosine is present on Tyr-124. Ser-126 is modified (phosphoserine).

Belongs to the EIF1AD family.

The protein resides in the cytoplasm. Its subcellular location is the nucleus. In Schizosaccharomyces pombe (strain 972 / ATCC 24843) (Fission yeast), this protein is S1-like domain-containing protein C146.08c.